Reading from the N-terminus, the 185-residue chain is UPF0149 protein PFL_5969 (185 aa).

It belongs to the UPF0149 family.

The protein is UPF0149 protein PFL_5969 of Pseudomonas fluorescens (strain ATCC BAA-477 / NRRL B-23932 / Pf-5).